The primary structure comprises 273 residues: MSILEKITSSPSECAEHLTNKDSCLSKKIQKELTSFLQKKETLGCDSESCVITHPAVKAYAQQKGLDLSKELETRFKAPGPRNNTGLLTNFNIDETLQRWAIKYTKFFNCPFSMMDFERVHYKFNQVDMVKVYKGEELQYVEGKVVKRPCNTFGCVLNTDFSTGTGKHWVAIFVDMRGDCWSIEYFNSAGNSPPGPVIRWMERVKQQLLKIHHTVKTLAVTNIRHQRSQTECGPYSLFYIRARLDNVSYAHFISARITDEDMYKFRTHLFRIA.

Catalysis depends on residues histidine 168 and asparagine 187. A substrate-binding site is contributed by glutamine 226. The active-site Nucleophile is cysteine 232.

It belongs to the peptidase C63 family.

Its subcellular location is the host cytoplasm. The protein resides in the virion. Its function is as follows. Cysteine protease that plays several role during infection including processing of the structural polyprotein or inhibition of the host immune response. Catalyzes the maturation of the pp220 and pp62 polyprotein precursors into core-shell proteins. Plays a role in the disruption of host pyroptosis via specific cleavage of gasdermin D/GSDMD. In addition, strongly decreases the host cGAS-STING signaling by targeting IKBKE via its enzymatic activity. Also impairs host FOXJ1-mediated antiviral effect via degradation of FOXJ1. The protein is SUMO-1 cysteine protease S273R of Ornithodoros (relapsing fever ticks).